The following is a 504-amino-acid chain: Aspartyl/glutamyl-tRNA(Asn/Gln) amidotransferase subunit B (504 aa).

This sequence belongs to the GatB/GatE family. GatB subfamily. In terms of assembly, heterotrimer of A, B and C subunits.

It carries out the reaction L-glutamyl-tRNA(Gln) + L-glutamine + ATP + H2O = L-glutaminyl-tRNA(Gln) + L-glutamate + ADP + phosphate + H(+). The catalysed reaction is L-aspartyl-tRNA(Asn) + L-glutamine + ATP + H2O = L-asparaginyl-tRNA(Asn) + L-glutamate + ADP + phosphate + 2 H(+). In terms of biological role, allows the formation of correctly charged Asn-tRNA(Asn) or Gln-tRNA(Gln) through the transamidation of misacylated Asp-tRNA(Asn) or Glu-tRNA(Gln) in organisms which lack either or both of asparaginyl-tRNA or glutaminyl-tRNA synthetases. The reaction takes place in the presence of glutamine and ATP through an activated phospho-Asp-tRNA(Asn) or phospho-Glu-tRNA(Gln). The protein is Aspartyl/glutamyl-tRNA(Asn/Gln) amidotransferase subunit B of Tropheryma whipplei (strain TW08/27) (Whipple's bacillus).